The chain runs to 346 residues: Phosphate acyltransferase (346 aa).

The protein belongs to the PlsX family. As to quaternary structure, homodimer. Probably interacts with PlsY.

It is found in the cytoplasm. The catalysed reaction is a fatty acyl-[ACP] + phosphate = an acyl phosphate + holo-[ACP]. The protein operates within lipid metabolism; phospholipid metabolism. Functionally, catalyzes the reversible formation of acyl-phosphate (acyl-PO(4)) from acyl-[acyl-carrier-protein] (acyl-ACP). This enzyme utilizes acyl-ACP as fatty acyl donor, but not acyl-CoA. The chain is Phosphate acyltransferase from Geotalea uraniireducens (strain Rf4) (Geobacter uraniireducens).